Here is a 321-residue protein sequence, read N- to C-terminus: Beta-ketoacyl-[acyl-carrier-protein] synthase III (321 aa).

Residues Cys115 and His248 contribute to the active site. The ACP-binding stretch occupies residues Gln249–Arg253. Residue Asn278 is part of the active site.

It belongs to the thiolase-like superfamily. FabH family. In terms of assembly, homodimer.

It is found in the cytoplasm. It catalyses the reaction malonyl-[ACP] + acetyl-CoA + H(+) = 3-oxobutanoyl-[ACP] + CO2 + CoA. It participates in lipid metabolism; fatty acid biosynthesis. Catalyzes the condensation reaction of fatty acid synthesis by the addition to an acyl acceptor of two carbons from malonyl-ACP. Catalyzes the first condensation reaction which initiates fatty acid synthesis and may therefore play a role in governing the total rate of fatty acid production. Possesses both acetoacetyl-ACP synthase and acetyl transacylase activities. Its substrate specificity determines the biosynthesis of branched-chain and/or straight-chain of fatty acids. This Aromatoleum aromaticum (strain DSM 19018 / LMG 30748 / EbN1) (Azoarcus sp. (strain EbN1)) protein is Beta-ketoacyl-[acyl-carrier-protein] synthase III.